A 542-amino-acid chain; its full sequence is Sialate O-acetylesterase (542 aa).

A signal peptide spans methionine 1–glycine 23. N-linked (GlcNAc...) asparagine glycans are attached at residues asparagine 107, asparagine 138, asparagine 188, asparagine 294, asparagine 357, asparagine 428, asparagine 449, and asparagine 463.

In terms of assembly, disulfide-linked heterodimer of a small subunit and a large subunit. In terms of processing, the two subunits are derived from a single precursor by proteolytic cleavage. Glycosylated. Widely expressed.

It is found in the lysosome. The catalysed reaction is N-acetyl-9-O-acetylneuraminate + H2O = N-acetylneuraminate + acetate + H(+). The enzyme catalyses an Ac-O-9-sialoglycoconjugate + H2O = a sialoglycoconjugate + acetate + H(+). Inhibited by diisopropyl fluorophosphate and diethyl-P-nitrophenyl phosphate. Functionally, catalyzes the removal of O-acetyl ester groups from position 9 of the free diacetylated sialate N-acetyl-9-O-acetylneuraminate (Neu5,9Ac2) in the cytosol and of the diacetylated sialate residues of sialylglycoconjugates in the lysosomes. Together with the sialate-O-acetyltransferase they regulate the balance of acetylated sialoglycoconjugates, key players in various processes such as cell-cell interactions, host-pathogen recognition, and tumor antigenicity. The polypeptide is Sialate O-acetylesterase (Siae) (Rattus norvegicus (Rat)).